The following is a 428-amino-acid chain: Immunoglobulin superfamily containing leucine-rich repeat protein (428 aa).

The N-terminal stretch at 1–18 (MQELHLLWWALLLGLAQA) is a signal peptide. The LRRNT domain occupies 19-50 (CPEPCDCGEKYGFQIADCAYRDLEAVPPGFPA). The N-linked (GlcNAc...) asparagine glycan is linked to Asn51. 5 LRR repeats span residues 51-72 (NVTA…AFRE), 75-96 (LLQS…ALAS), 99-122 (HLKS…HNLS), 123-144 (ALQL…AFRS), and 147-168 (ALRS…TFTP). The LRRCT domain occupies 180–231 (NPFDCTCGIVWLKTWALATAVSIPEQDNIACTSPHVLKGTPLSRLPPLPCSA). Residues 232-343 (PSVQLSYQPS…GSAESSVDVA (112 aa)) enclose the Ig-like domain. Cys257 and Cys327 are disulfide-bonded. A glycan (N-linked (GlcNAc...) asparagine) is linked at Asn309.

It is found in the secreted. In Pongo abelii (Sumatran orangutan), this protein is Immunoglobulin superfamily containing leucine-rich repeat protein (ISLR).